The sequence spans 617 residues: MSPQRDRINAFDKDNPHPXXXXXXXXXXXXXXXRPYVLLAVLFVMFLSLIGLLAIAGIRFHRAAIYTAEIHKSLSTNLDVTNSIEHQVKDVLTPLFKIIGDEVGLRTPQRFTDLVKFISDKIKFLNPDREYDFRDLTWCINPPERIKLDYDQYCADVAAEELMNALVNSTLLETRTTNQFLAVSKGNCSGPTTIRGQFSNMSLSLLDLYLSRSYNVSSIVTMTSQGMHGGTYLVGKPNLSNKGSELSQLSMYRVFEVGVIRNPGLGAPVFHMTNYFEQPVSNDLSNCMVALGELKLAALCHGEDSITIPYQGSGKGVSIQLVKLGVWKSPTDMQSWVPLSTDDPVIDRLYLSSHRGVIADNQAKWAVPTTRTDDKLRMETCFQQACRGEVQALCEDPEWAPLKDGRIPSYGVLSVDLSLTVELKIKIASGFGPLITRGSGMDLYRSNHNNVCWLAVPPMKSLALGVVNTLEWMPGFKVGPYLFTVPIKEAGEDCHAPAYLPAEVDGDVKLSSNLVILPGQDLQYVLATYDTSRVEHAVVYYVYSPGRSFSYFYPFRLPIKGVPIELQVECFTWDQKLWCRHFCVLADSESGGHITHSGMVGMGVSCTVTREDGTNCR.

Residues 1–37 (MSPQRDRINAFDKDNPHPXXXXXXXXXXXXXXXRPYV) are Intravirion-facing. Residues 1-154 (MSPQRDRINA…RIKLDYDQYC (154 aa)) are stalk. A helical; Signal-anchor for type II membrane protein membrane pass occupies residues 38 to 58 (LLAVLFVMFLSLIGLLAIAGI). Topologically, residues 59–617 (RFHRAAIYTA…VTREDGTNCR (559 aa)) are virion surface. Asn168, Asn187, Asn200, Asn215, and Asn238 each carry an N-linked (GlcNAc...) asparagine; by host glycan. Intrachain disulfides connect Cys188/Cys606, Cys287/Cys300, Cys381/Cys494, Cys386/Cys394, and Cys570/Cys579. Residues 458-543 (PMKSLALGVV…VEHAVVYYVY (86 aa)) form an interaction with host NECTIN4 receptor region.

The protein belongs to the paramyxoviruses hemagglutinin-neuraminidase family. Non-sialidase subfamily. Homodimer; disulfide-linked. Further forms homotetramer (dimer of dimers). Interacts (via C-terminus) with human NECTIN4 (via N-terminus); this interaction allows attachment to the respiratory epithelium and viral entry. Interacts (via C-terminus) with human SLAMF1/CD150 (via N-terminus); this interaction allows attachment and viral entry into the CD150-expressing immune cells.

Its subcellular location is the virion membrane. The protein resides in the host cell membrane. Its function is as follows. Attaches the virus to the human SLAMF1/CD150 receptor for entry into host dendritic cells, macrophages, activated memory T cells and naive or memory B cells, thereby explaining the long immunosuppression that follows infection. In the respiratory airways, binds to the NECTIN4 receptor for entry into the host cell. Binding of H protein to the receptor induces a conformational change that allows the F protein to trigger virion/cell membranes fusion. The vaccine and laboratory-adapted strains use host CD46 as an alternate receptor. The high degree of interaction between H and CD46 results in down-regulation of the latter from the surface of infected cells, rendering them more sensitive to c3b-mediated complement lysis. The sequence is that of Hemagglutinin glycoprotein (H) from Homo sapiens (Human).